The following is a 199-amino-acid chain: Probable GTP-binding protein EngB (199 aa).

Positions 24 to 197 (EGYEVIFAGR…GARLNTFFGY (174 aa)) constitute an EngB-type G domain. GTP contacts are provided by residues 32–39 (GRSNAGKS), 59–63 (GKTQH), 77–80 (DLPG), 144–147 (TKSD), and 176–178 (FSS). Mg(2+) is bound by residues Ser-39 and Thr-61.

The protein belongs to the TRAFAC class TrmE-Era-EngA-EngB-Septin-like GTPase superfamily. EngB GTPase family. Mg(2+) serves as cofactor.

Its function is as follows. Necessary for normal cell division and for the maintenance of normal septation. The chain is Probable GTP-binding protein EngB from Ruthia magnifica subsp. Calyptogena magnifica.